Reading from the N-terminus, the 545-residue chain is Glucose-6-phosphate isomerase (545 aa).

Catalysis depends on E351, which acts as the Proton donor. Residues H382 and K510 contribute to the active site.

This sequence belongs to the GPI family.

The protein localises to the cytoplasm. It carries out the reaction alpha-D-glucose 6-phosphate = beta-D-fructose 6-phosphate. The protein operates within carbohydrate biosynthesis; gluconeogenesis. It functions in the pathway carbohydrate degradation; glycolysis; D-glyceraldehyde 3-phosphate and glycerone phosphate from D-glucose: step 2/4. Its function is as follows. Catalyzes the reversible isomerization of glucose-6-phosphate to fructose-6-phosphate. In Shewanella woodyi (strain ATCC 51908 / MS32), this protein is Glucose-6-phosphate isomerase.